A 361-amino-acid polypeptide reads, in one-letter code: Beta-hexosaminidase (361 aa).

Substrate contacts are provided by residues Asp69, Arg77, Arg144, and Lys174 to His175. His187 functions as the Proton donor/acceptor in the catalytic mechanism. The Nucleophile role is filled by Asp258.

It belongs to the glycosyl hydrolase 3 family. NagZ subfamily.

Its subcellular location is the cytoplasm. It catalyses the reaction Hydrolysis of terminal non-reducing N-acetyl-D-hexosamine residues in N-acetyl-beta-D-hexosaminides.. Its pathway is cell wall biogenesis; peptidoglycan recycling. Functionally, plays a role in peptidoglycan recycling by cleaving the terminal beta-1,4-linked N-acetylglucosamine (GlcNAc) from peptide-linked peptidoglycan fragments, giving rise to free GlcNAc, anhydro-N-acetylmuramic acid and anhydro-N-acetylmuramic acid-linked peptides. The sequence is that of Beta-hexosaminidase from Neisseria meningitidis serogroup A / serotype 4A (strain DSM 15465 / Z2491).